Here is a 492-residue protein sequence, read N- to C-terminus: Beta-Ala-His dipeptidase (492 aa).

Residue H107 participates in Zn(2+) binding. D109 is an active-site residue. D140 provides a ligand contact to Zn(2+). E174 functions as the Proton acceptor in the catalytic mechanism. E175 lines the Zn(2+) pocket. Position 194 is a phosphoserine (S194). Zn(2+) contacts are provided by D203 and H453.

This sequence belongs to the peptidase M20A family. Homodimer. The cofactor is Zn(2+). As to expression, detected exclusively in kidney.

It localises to the secreted. The catalysed reaction is Preferential hydrolysis of the beta-Ala-|-His dipeptide (carnosine), and also anserine, Xaa-|-His dipeptides and other dipeptides including homocarnosine.. It carries out the reaction carnosine + H2O = beta-alanine + L-histidine. The enzyme catalyses anserine + H2O = N(pros)-methyl-L-histidine + beta-alanine. It catalyses the reaction L-alanyl-L-histidine + H2O = L-histidine + L-alanine. The catalysed reaction is glycyl-L-histidine + H2O = L-histidine + glycine. It carries out the reaction L-homocarnosine + H2O = 4-aminobutanoate + L-histidine. Catalyzes the peptide bond hydrolysis in Xaa-His dipeptides, displaying the highest activity toward carnosine (beta-alanyl-L-histidine) and anserine (beta-alanyl-3-methyl-histidine). The sequence is that of Beta-Ala-His dipeptidase (Cndp1) from Mus musculus (Mouse).